Reading from the N-terminus, the 111-residue chain is Photosystem II reaction center Psb28 protein (111 aa).

The protein belongs to the Psb28 family. In terms of assembly, part of the photosystem II complex.

It localises to the cellular thylakoid membrane. This Gloeothece citriformis (strain PCC 7424) (Cyanothece sp. (strain PCC 7424)) protein is Photosystem II reaction center Psb28 protein.